We begin with the raw amino-acid sequence, 2412 residues long: MKRKGMNTKLRLSPSEEAFILKEDYERRRKLRLLQVREQERGIAFQIREGIKQRRSQQVSHLAEELRAKWEEAQSQKIQNLEKLYLASLRHMGDGHRQAKENEPDLDALSRRAAERKRKAEVRHKEALKVQKNQKEMLMKQKTRHIKARKEAVLVEKQRSAKMARLPPPVPSPFENIDVNRIPSLKTNSSTYHHISTFVSRQMGTKQPDAHLAAEEEARRVERLRKQAAQERVKQFERAHVRGSQAMKKIHLAQNQERLMEELKQLQKEDLARRRQTVAQMPPQMLELPYRRSEMKEDRQRELEFAFEDMYNADRKVKGNLILHLKPEPLPTISDQLQDEELDLSMEQENQVPLAAKIQQIPSRILFKRLLNKIRSQKSLWTIKSVSEDEGEVTSSIIEIESKVPSVDSGAIITEERTAASFEQEQVTDSDRLTIESGPLSSEDKPLYYKAGTGREQAMAVSPPATAVAQSSVLLHPQEEAVRIRMSLRRKQIMEIEEQKQKQLELLEQIEQQKLRLETDCFRAQLEEQRKQADQPEVCCAPMSHAMISDEDSHRQMIRNYQHQLLQQNRLHKETVETARKRLLEYQTVLKERSPSLSASALVPDSVVSGPPQQSYKPAAASDSWDPSQRLKLSPSKYQPVQPSQIPALEQSHIQVPRHGHITQRQGKMAVSEMLGKQPVESQERQWQFSQVETHQGDYEFVLKDSHSLSRTLSYVRPQTLQDAREVSKPPRVIICQSLDSQQISSEDSENISSKPSEPSPFLPLVPERPFTSLPVKFHSGTIHKPFTTINQSVISQMHDQPLSSSETITAQQGDLRFLQEQLELQKKVLQARQEAREKLLLCTQKELGQQTGLPVFLPSPAGNIFSSLPSASAESGNFQTSSTKSDATVSSDNMDRLWDSSQPISSQQTHLEFLQEQSSVETDNLQARREAQEVLFAHTQNTLEKIVRSEQAGSSLPHQVAQQSFSSLTLADTQSKKIQKQPLPANKKGLLPSQSEVSKAQDGSSGFLQQTLPLQNTLKLLQEQLTRQRSMIPPRRDGQETLLLYKESCSEDSEAGPVESLSSVVVQHADASRAVSEVPKRLQDVYSSEEENRVLSSHLITHGFPQHSLQRQEHFTPLQEETHIQRLILGARKNNEEFAPKQNELEKGLCSQQTDALSSPSQVTDWGTSRGSVSVRSDRTDPLRHFKIPAFRERLVRVSQHTFPLQDNLQEHQEWVDTEKESFQSSPLTPENPSSQQTGFSSFKASLRLPSCVSLPSADSGITQHPLSTESDSKVKSSHLQIPELQHRLSKISQLIPPQQDSLKALQEQLATQREAIIHSRQEAHEETLREWKEKIFPEQVGPFSPLIPQHSLASFPVSDTERAQELCSTNSDTISSGYPEMLELPDRTLGLSHTALPQQNNLTAHPEHLHAQTNFFHSTEKAQEGLVFPRPCQFEEMSAEHFIQPQHDDLKALQQQLDMQREAIRSGQEMQEKMLLQRLNKLEQRISSKQISSSLFSSQVALPIANSDGTLQSFPTKSNETELLGSQDEYLSFSQPRLPLQNNMTEQLDLEKVFHKELLLHKQKSQNKSESSEHSLPPLFLSKEIEHPFISLPFAESKSKSICELYLSDKKHAAPNDAVIPRLQDRLLSCSQPVLTQQDNMSLQKQLNLQRETLHSRQKAQEELLVQRQTSLQQQIQRHRETLKNFFNVSQARNPTDENDLEMQKREQLGGWFPHTQGLTWGDAGQGSANGEQPRADVHAEHNGESLAKELSGRASKPPVSKVKCVLDLNQHELSTIQEVESPASGRISMPGKAEFYQDRDPLRVSVSREQSFLESPLAHDPFGCHQPPAQENSKSHDDNAEAVKVKKSDVEDHAVLSHAVSKEEACTNLGPLGKPDDEAETQEISQEPLSSVTVSTGSFLSYEITDLSLTDPESFSEQTEHLEQESTNKQEETDPLSIAVPSVIYQQQHSLGAHNSLLPMEEESTSDHTHVQQIMDNDVNEANLIPDKRDFQVPAVDLDFRELEHIFPHLHRQLFKPLEPHLDFDLSSPGTSQEDSDFYQSSESSSEKHVKALSTGTICFPALTAKSHSPNPRLNQLDINLAHATTEGSEQSFQQLRPEFSSQESQHADLPSIYSIEARGPSQRMENQNYSEMLQNKKKSLSLQPSTEDLTPACSSSDTALFDQLHLQHSTPCASVSSECSVKLLESREEVLGFEELSRRAVTMSQRLTEDENVVLPINPHVGRVEKEASVQGSNPLSIQNEKPIQNFIETDTTEAVGNVCQLAQAEHILKSCPFRSPIPIWETDTGYGIMEEPDLTLVSNSDISITETDLANLTLEDREDNEAQFFQAGVVLPTSSMETSVCGAVSEPYVDQPTVAPSATSGSLQEAFMTRQTLTERSYQRQREIWNKTRLPQTKVSKEKLPTGCTGS.

Positions 1–540 (MKRKGMNTKL…KQADQPEVCC (540 aa)) are necessary for centriole targeting and microtubule association. Ser13 carries the post-translational modification Phosphoserine. 5 coiled-coil regions span residues 63–84 (AEEL…LEKL), 114–134 (AERK…QKNQ), 209–273 (DAHL…DLAR), 489–535 (RRKQ…QADQ), and 563–592 (HQLL…VLKE). 2 disordered regions span residues 600–641 (SALV…YQPV) and 739–762 (LDSQ…PSPF). Ser634 carries the post-translational modification Phosphoserine. The span at 739 to 757 (LDSQQISSEDSENISSKPS) shows a compositional bias: polar residues. Positions 811-841 (AQQGDLRFLQEQLELQKKVLQARQEAREKLL) form a coiled coil. 4 disordered regions span residues 871–891 (SASA…ATVS), 973–1005 (DTQS…QDGS), 1158–1178 (LSSP…SVRS), and 1216–1240 (WVDT…QQTG). Polar residues-rich tracts occupy residues 993–1005 (PSQS…QDGS), 1158–1176 (LSSP…SVSV), and 1224–1240 (FQSS…QQTG). Coiled coils occupy residues 1300–1327 (QQDS…EAHE) and 1448–1493 (QHDD…SKQI). At Ser1573 the chain carries Phosphoserine. Disordered regions lie at residues 1820–1895 (LAHD…LSSV), 1916–1937 (ESFS…EETD), 2028–2048 (DLSS…SESS), and 2089–2111 (TEGS…SQHA). Basic and acidic residues predominate over residues 1836–1868 (SKSHDDNAEAVKVKKSDVEDHAVLSHAVSKEEA). A compositionally biased stretch (polar residues) spans 1885–1895 (QEISQEPLSSV). A compositionally biased stretch (basic and acidic residues) spans 1921–1935 (QTEHLEQESTNKQEE). Residues 2089 to 2108 (TEGSEQSFQQLRPEFSSQES) show a composition bias toward polar residues. The interval 2367–2412 (SLQEAFMTRQTLTERSYQRQREIWNKTRLPQTKVSKEKLPTGCTGS) is ALMS motif.

In terms of assembly, interacts (via ALMS motif) with microtubules; this interaction is direct.

It is found in the cytoplasm. Its subcellular location is the cytoskeleton. The protein localises to the microtubule organizing center. The protein resides in the centrosome. It localises to the centriole. It is found in the spindle. In terms of biological role, centriole-enriched microtubule-binding protein involved in centriole biogenesis. Essential for the generation of the distal portion of new-born centrioles in a CPAP- and CEP120-mediated elongation dependent manner during the cell cycle S/G2 phase after formation of the initiating cartwheel structure. Required for the recruitment of centriolar proteins, such as POC1B, POC5 and CEP135, into the distal portion of centrioles. Also required for centriole-to-centrosome conversion during mitotic progression, but is dispensable for cartwheel removal or centriole disengagement. Binds to and stabilizes centriolar microtubule. May be involved in ciliogenesis. This chain is Centrosomal protein of 295 kDa, found in Mus musculus (Mouse).